We begin with the raw amino-acid sequence, 340 residues long: Glycerol-3-phosphate dehydrogenase [NAD(P)+] (340 aa).

Residues Ser-11, Trp-12, Arg-32, Arg-33, and Lys-106 each coordinate NADPH. The sn-glycerol 3-phosphate site is built by Lys-106, Gly-138, and Ser-140. Ala-142 contributes to the NADPH binding site. The sn-glycerol 3-phosphate site is built by Lys-193, Asp-246, Ser-256, Arg-257, and Asn-258. Lys-193 serves as the catalytic Proton acceptor. Residue Arg-257 participates in NADPH binding. Residues Val-281 and Glu-283 each coordinate NADPH.

Belongs to the NAD-dependent glycerol-3-phosphate dehydrogenase family.

The protein localises to the cytoplasm. It catalyses the reaction sn-glycerol 3-phosphate + NAD(+) = dihydroxyacetone phosphate + NADH + H(+). The enzyme catalyses sn-glycerol 3-phosphate + NADP(+) = dihydroxyacetone phosphate + NADPH + H(+). It participates in membrane lipid metabolism; glycerophospholipid metabolism. In terms of biological role, catalyzes the reduction of the glycolytic intermediate dihydroxyacetone phosphate (DHAP) to sn-glycerol 3-phosphate (G3P), the key precursor for phospholipid synthesis. In Shouchella clausii (strain KSM-K16) (Alkalihalobacillus clausii), this protein is Glycerol-3-phosphate dehydrogenase [NAD(P)+].